The chain runs to 506 residues: Protein spinster homolog 1 (506 aa).

Residues 1-42 (MSQADADITPFFADDNEGEGPVENGVGSPLPEDEEEESPSGV) are disordered. Over residues 21 to 30 (PVENGVGSPL) the composition is skewed to low complexity. 12 helical membrane-spanning segments follow: residues 52-71 (IVLCYINLLNYMDRFTVAGV), 87-107 (GLLQTVFICSYMFLAPLFGYL), 115-135 (LIMCVGIFFWSVVTLASSFIG), 149-169 (VGVGEASYSTIAPTIIADLFV), 176-196 (MLSIFYFAIPVGSGMGYIVGS), 207-227 (WALRVTPGLGLLAVFLLMLVV), 266-286 (FGFTAVAFVTGSLALWAPAFL), 310-330 (LIFGAITVVTGILGVASGVQA), 344-364 (LVCAAGLLLAAPFLYLSIMFA), 373-393 (VFIFLGETFLSMNWAIVADIL), 408-428 (FQIVLSHLLGDAISPYLIGVV), and 450-470 (LLCSFVAVAGGAFFLATAVFI).

Belongs to the major facilitator superfamily. Spinster (TC 2.A.1.49) family. In terms of tissue distribution, expressed in yolk cells.

The protein localises to the lysosome membrane. The catalysed reaction is a 1-acyl-sn-glycero-3-phosphocholine(out) + H(+)(out) = a 1-acyl-sn-glycero-3-phosphocholine(in) + H(+)(in). It carries out the reaction a 1-acyl-sn-glycero-3-phosphoethanolamine(out) + H(+)(out) = a 1-acyl-sn-glycero-3-phosphoethanolamine(in) + H(+)(in). The enzyme catalyses a 1-O-(1Z-alkenyl)-sn-glycero-3-phosphocholine(out) + H(+)(out) = a 1-O-(1Z-alkenyl)-sn-glycero-3-phosphocholine(in) + H(+)(in). It catalyses the reaction a 1-O-(1Z-alkenyl)-sn-glycero-3-phosphoethanolamine(out) + H(+)(out) = a 1-O-(1Z-alkenyl)-sn-glycero-3-phosphoethanolamine(in) + H(+)(in). Functionally, mediates the rate-limiting, proton-dependent, lysosomal efflux of lysophospholipids. Selective for zwitterionic headgroups such as lysophosphatidylcholine (LPC) and lysophosphatidylethanolamine (LPE). Essential player in lysosomal homeostasis. Critical for embryogenesis. Involved in the regulation of developmental senescence. This chain is Protein spinster homolog 1 (spns1), found in Danio rerio (Zebrafish).